A 288-amino-acid polypeptide reads, in one-letter code: 4-diphosphocytidyl-2-C-methyl-D-erythritol kinase (288 aa).

Lys8 is an active-site residue. Pro92–Thr102 contacts ATP. Residue Asp134 is part of the active site.

It belongs to the GHMP kinase family. IspE subfamily.

It carries out the reaction 4-CDP-2-C-methyl-D-erythritol + ATP = 4-CDP-2-C-methyl-D-erythritol 2-phosphate + ADP + H(+). The protein operates within isoprenoid biosynthesis; isopentenyl diphosphate biosynthesis via DXP pathway; isopentenyl diphosphate from 1-deoxy-D-xylulose 5-phosphate: step 3/6. Its function is as follows. Catalyzes the phosphorylation of the position 2 hydroxy group of 4-diphosphocytidyl-2C-methyl-D-erythritol. In Clostridium perfringens (strain 13 / Type A), this protein is 4-diphosphocytidyl-2-C-methyl-D-erythritol kinase.